Consider the following 134-residue polypeptide: Small ribosomal subunit protein uS9c (134 aa).

The protein belongs to the universal ribosomal protein uS9 family.

Its subcellular location is the plastid. The protein localises to the chloroplast. This is Small ribosomal subunit protein uS9c (rps9) from Guillardia theta (Cryptophyte).